We begin with the raw amino-acid sequence, 360 residues long: DNA polymerase IV (360 aa).

A UmuC domain is found at 8–191 (VLHVDMDSFF…LPVGRIPGIG (184 aa)). Positions 12 and 110 each coordinate Mg(2+). Residue E111 is part of the active site.

Belongs to the DNA polymerase type-Y family. In terms of assembly, monomer. Requires Mg(2+) as cofactor.

It localises to the cytoplasm. The enzyme catalyses DNA(n) + a 2'-deoxyribonucleoside 5'-triphosphate = DNA(n+1) + diphosphate. In terms of biological role, poorly processive, error-prone DNA polymerase involved in untargeted mutagenesis. Copies undamaged DNA at stalled replication forks, which arise in vivo from mismatched or misaligned primer ends. These misaligned primers can be extended by PolIV. Exhibits no 3'-5' exonuclease (proofreading) activity. May be involved in translesional synthesis. The sequence is that of DNA polymerase IV from Methanoculleus marisnigri (strain ATCC 35101 / DSM 1498 / JR1).